The chain runs to 400 residues: MKLQEIKNIDITGKKVFIRCDFNVPMDEYNNITDDRRIRSALNTIRYCIDHDCSVILSSHFGRPKGGFEEKYSLLPIAKRLHILLKQDIKMAPGVICDETLQMAKELKAGEILLLENMRFEAGETKNDEELSKKLASMAEIYINDAFGVSHRAHASVEGISKYFDIEHKAAGFLMAKEIKFFHHIIHNPKRPFIAIVGGSKVSGKLEALYNLIPKVDKIIIGGGMAFTFLKARGHEIGNSLVEDDLIPEALKIMEEAKSKGVKLYLPVDVVAAEAFDAEAIAKIATIQEMPKGWMGLDIGPASALLFSEALSDANTILWNGPMGVYEMDRFAKGSTKISHAVANSYATTVVGGGDTADLVRVTGDEDDMTFISTGGGASLELIEGKVLPGVKALVIEEND.

Residues 21–23 (DFN), Arg37, 60–63 (HFGR), Arg119, and Arg152 each bind substrate. Residues Lys205, Gly296, Glu327, and 353–356 (GGDT) contribute to the ATP site.

It belongs to the phosphoglycerate kinase family. In terms of assembly, monomer.

It localises to the cytoplasm. The catalysed reaction is (2R)-3-phosphoglycerate + ATP = (2R)-3-phospho-glyceroyl phosphate + ADP. Its pathway is carbohydrate degradation; glycolysis; pyruvate from D-glyceraldehyde 3-phosphate: step 2/5. The chain is Phosphoglycerate kinase from Aliarcobacter butzleri (strain RM4018) (Arcobacter butzleri).